Reading from the N-terminus, the 369-residue chain is Protein-glutamate methylesterase/protein-glutamine glutaminase 1 (369 aa).

One can recognise a Response regulatory domain in the interval 3 to 120 (KVVVVDDSAF…SLDIVKIEKD (118 aa)). Asp54 carries the 4-aspartylphosphate modification. Residues 136 to 168 (RSFRPAPAVRPAAPAALRATPRPSAAPSSAASS) show a composition bias toward low complexity. The interval 136 to 174 (RSFRPAPAVRPAAPAALRATPRPSAAPSSAASSTGTLQV) is disordered. A CheB-type methylesterase domain is found at 177–369 (GKPVRDVVAI…AQAIMNAVYK (193 aa)). Catalysis depends on residues Ser189, His216, and Asp312.

It belongs to the CheB family. Phosphorylated by CheA. Phosphorylation of the N-terminal regulatory domain activates the methylesterase activity.

Its subcellular location is the cytoplasm. The catalysed reaction is [protein]-L-glutamate 5-O-methyl ester + H2O = L-glutamyl-[protein] + methanol + H(+). It carries out the reaction L-glutaminyl-[protein] + H2O = L-glutamyl-[protein] + NH4(+). In terms of biological role, involved in chemotaxis. Part of a chemotaxis signal transduction system that modulates chemotaxis in response to various stimuli. Catalyzes the demethylation of specific methylglutamate residues introduced into the chemoreceptors (methyl-accepting chemotaxis proteins or MCP) by CheR. Also mediates the irreversible deamidation of specific glutamine residues to glutamic acid. This chain is Protein-glutamate methylesterase/protein-glutamine glutaminase 1, found in Oleidesulfovibrio alaskensis (strain ATCC BAA-1058 / DSM 17464 / G20) (Desulfovibrio alaskensis).